We begin with the raw amino-acid sequence, 314 residues long: Pantothenate synthetase (314 aa).

43–50 (MGALHEGH) lines the ATP pocket. Catalysis depends on H50, which acts as the Proton donor. Q75 serves as a coordination point for (R)-pantoate. Q75 provides a ligand contact to beta-alanine. Residues 112-131 (MYPDGTRTSVHPGPLGDDLE) are disordered. 161-164 (GEKD) is an ATP binding site. Position 167 (Q167) interacts with (R)-pantoate. ATP-binding positions include V190 and 198–201 (LSSR).

It belongs to the pantothenate synthetase family. As to quaternary structure, homodimer.

Its subcellular location is the cytoplasm. It carries out the reaction (R)-pantoate + beta-alanine + ATP = (R)-pantothenate + AMP + diphosphate + H(+). The protein operates within cofactor biosynthesis; (R)-pantothenate biosynthesis; (R)-pantothenate from (R)-pantoate and beta-alanine: step 1/1. Its function is as follows. Catalyzes the condensation of pantoate with beta-alanine in an ATP-dependent reaction via a pantoyl-adenylate intermediate. The polypeptide is Pantothenate synthetase (Mycolicibacterium smegmatis (strain ATCC 700084 / mc(2)155) (Mycobacterium smegmatis)).